The following is a 320-amino-acid chain: Malate dehydrogenase (320 aa).

NAD(+) is bound by residues 10 to 15 (GAGQIG) and D34. Residues R83 and R89 each contribute to the substrate site. Residues N96 and 119-121 (ITN) contribute to the NAD(+) site. The substrate site is built by N121 and R152. H176 serves as the catalytic Proton acceptor.

Belongs to the LDH/MDH superfamily. MDH type 3 family.

It carries out the reaction (S)-malate + NAD(+) = oxaloacetate + NADH + H(+). Functionally, catalyzes the reversible oxidation of malate to oxaloacetate. This Cereibacter sphaeroides (strain ATCC 17029 / ATH 2.4.9) (Rhodobacter sphaeroides) protein is Malate dehydrogenase.